We begin with the raw amino-acid sequence, 159 residues long: Ribosomal RNA large subunit methyltransferase H (159 aa).

S-adenosyl-L-methionine-binding positions include L76, G108, and 127 to 132; that span reads FSKMTF.

Belongs to the RNA methyltransferase RlmH family. As to quaternary structure, homodimer.

The protein resides in the cytoplasm. The enzyme catalyses pseudouridine(1915) in 23S rRNA + S-adenosyl-L-methionine = N(3)-methylpseudouridine(1915) in 23S rRNA + S-adenosyl-L-homocysteine + H(+). Specifically methylates the pseudouridine at position 1915 (m3Psi1915) in 23S rRNA. The sequence is that of Ribosomal RNA large subunit methyltransferase H from Geobacillus thermodenitrificans (strain NG80-2).